A 237-amino-acid chain; its full sequence is Uridylate kinase (237 aa).

11–14 (KLSG) lines the ATP pocket. A UMP-binding site is contributed by G53. ATP is bound by residues G54 and R58. UMP-binding positions include D73 and 134–141 (TGNPFFTT). ATP-binding residues include T161, Y167, and D170.

The protein belongs to the UMP kinase family. In terms of assembly, homohexamer.

Its subcellular location is the cytoplasm. It catalyses the reaction UMP + ATP = UDP + ADP. The protein operates within pyrimidine metabolism; CTP biosynthesis via de novo pathway; UDP from UMP (UMPK route): step 1/1. Inhibited by UTP. Functionally, catalyzes the reversible phosphorylation of UMP to UDP. The polypeptide is Uridylate kinase (Burkholderia cenocepacia (strain HI2424)).